Here is a 158-residue protein sequence, read N- to C-terminus: NADPH-dependent 7-cyano-7-deazaguanine reductase (158 aa).

A disordered region spans residues 1–37 (MAKRSIKSETSPELQLGRPVTAPDSPETARLDRVPNP). Positions 27–37 (ETARLDRVPNP) are enriched in basic and acidic residues. Cysteine 56 functions as the Thioimide intermediate in the catalytic mechanism. Residue aspartate 63 is the Proton donor of the active site. Substrate is bound by residues 78 to 80 (VES) and 97 to 98 (HE).

Belongs to the GTP cyclohydrolase I family. QueF type 1 subfamily.

The protein localises to the cytoplasm. It catalyses the reaction 7-aminomethyl-7-carbaguanine + 2 NADP(+) = 7-cyano-7-deazaguanine + 2 NADPH + 3 H(+). The protein operates within tRNA modification; tRNA-queuosine biosynthesis. In terms of biological role, catalyzes the NADPH-dependent reduction of 7-cyano-7-deazaguanine (preQ0) to 7-aminomethyl-7-deazaguanine (preQ1). The polypeptide is NADPH-dependent 7-cyano-7-deazaguanine reductase (Bradyrhizobium sp. (strain BTAi1 / ATCC BAA-1182)).